Consider the following 207-residue polypeptide: MTSVNLYKQDGSQNGTVELNDAVFGVEPNENVVFDAILRQRASLRQGTHAVKNRSAVSGGGKKPWRQKGTGRARQGSIRSPQFRGGGIVFGPTPRSYKYSLPRKVRQLAIKSALSQKVLDNSFVVVDALNFDAPKTKEFADVMGNLNVAEKTLVVVTDDDKNAALSARNLANATVVTPAGVNILNVVDNQKIVITKSALSQVEEVLA.

The disordered stretch occupies residues 48–87 (THAVKNRSAVSGGGKKPWRQKGTGRARQGSIRSPQFRGGG).

This sequence belongs to the universal ribosomal protein uL4 family. As to quaternary structure, part of the 50S ribosomal subunit.

Its function is as follows. One of the primary rRNA binding proteins, this protein initially binds near the 5'-end of the 23S rRNA. It is important during the early stages of 50S assembly. It makes multiple contacts with different domains of the 23S rRNA in the assembled 50S subunit and ribosome. Forms part of the polypeptide exit tunnel. The polypeptide is Large ribosomal subunit protein uL4 (Limosilactobacillus reuteri subsp. reuteri (strain JCM 1112) (Lactobacillus reuteri)).